A 250-amino-acid polypeptide reads, in one-letter code: tRNA (guanine-N(1)-)-methyltransferase (250 aa).

S-adenosyl-L-methionine-binding positions include glycine 116 and 136-141 (IGDYVL).

Belongs to the RNA methyltransferase TrmD family. As to quaternary structure, homodimer.

It localises to the cytoplasm. The catalysed reaction is guanosine(37) in tRNA + S-adenosyl-L-methionine = N(1)-methylguanosine(37) in tRNA + S-adenosyl-L-homocysteine + H(+). Specifically methylates guanosine-37 in various tRNAs. This is tRNA (guanine-N(1)-)-methyltransferase from Pseudomonas fluorescens (strain SBW25).